Reading from the N-terminus, the 148-residue chain is Small ribosomal subunit protein eS6 (148 aa).

The protein belongs to the eukaryotic ribosomal protein eS6 family.

This Pyrobaculum aerophilum (strain ATCC 51768 / DSM 7523 / JCM 9630 / CIP 104966 / NBRC 100827 / IM2) protein is Small ribosomal subunit protein eS6.